Here is a 142-residue protein sequence, read N- to C-terminus: 3-hydroxyacyl-[acyl-carrier-protein] dehydratase FabZ (142 aa).

The active site involves His-49.

This sequence belongs to the thioester dehydratase family. FabZ subfamily.

It is found in the cytoplasm. The catalysed reaction is a (3R)-hydroxyacyl-[ACP] = a (2E)-enoyl-[ACP] + H2O. Functionally, involved in unsaturated fatty acids biosynthesis. Catalyzes the dehydration of short chain beta-hydroxyacyl-ACPs and long chain saturated and unsaturated beta-hydroxyacyl-ACPs. This Deinococcus geothermalis (strain DSM 11300 / CIP 105573 / AG-3a) protein is 3-hydroxyacyl-[acyl-carrier-protein] dehydratase FabZ.